We begin with the raw amino-acid sequence, 1060 residues long: MPRDESINKVLIIGSGPIQIGQAAEFDYSGSQACKSLREEGIETVLVNSNPATIQTDMEMADRVYVEPLTPEIVAKIIQKEKPDAVLPTMGGQTGLNVATGLAEMGALEGVRVIGSSIETIRNVEDRDLFDSFMKKLNEPVPAARAVSSVEEALEAVEEIGYPVIVRPAFTLGGTGGGVAHSRDELIEIATRGLEMSFINQVLIDQSVLGWKEFEYEVMRDRNDTCIIVLCNMENIDPMGIHTGESVVVAPAQTLSDEDNQRLRDAAIKIIRALKIEGGCNIQFAVHPETGEYKVIEVNPRVSRSSALASKATGYPIAKIAAKIAVGMTLDEIQNDITKETPASFEPTIDYVVTKIPRWPFDKFKGISREIGVQMKSTGEVMAIGRTLEESLNKAIRSLDIGADGFTETPYTRADLENPTDQRLFQVYTALRDGMSIEEIHGLTQIDPFFLQKISNIAEFESSITRESLEDPRILLKAKRMGFSDSRLASLTGMDESSIRALRLENNIKPVYKMVDTCAAEFEARTPYYYGCYDLEDEVEVSDRRKVLIIGSGPIRIGQGIEFDYCCVHAAMALTEDGYETIMVNNNPETVSTDYDISDKLYFEPLTLEDVLAIIEKEKPEGVVVQFGGQTSINLAVPLAEAGVRILGTPHESIDRVEDRERFTEVLNKLGIPQAPYGIAKSFEDARAVAERIGYPVLVRPSYVLGGRAMEIVYDDVELEEYMREAVRVSPEHPILVDKFLEDAIEVDVDALCDGTDVYIGGIMEHIEEAGVHSGDSACVIPPQSIPEDIIDTIKEYTRKLALELEVVGLINIQYAVKPDSDPSVYILEANPRASRTVPFVSKATGVPLAKMAARLMMGAKLRDLGLTEEKDIEHVAVKESVFPFIKLPGADSVLGPEMKSTGEAMGIDENFGIAYYKSQLSASMDLLNEGKVFISVRDQDKDKIADIVKKADELGFRIMATRGTARAVSDIADIEVVRKVSQGSPNIRDAILDGEVGLIINTPSGKQSADDGYLIRRMAVELGIPYVTTLAGARAALNAIEAVRMGKITVKSLDEYHGM.

Residues 1–400 (MPRDESINKV…SLNKAIRSLD (400 aa)) are carboxyphosphate synthetic domain. The ATP site is built by Arg-127, Arg-167, Gly-173, Gly-174, Gln-206, Val-208, Glu-213, Gly-240, Ile-241, His-242, Gln-283, and Glu-297. One can recognise an ATP-grasp 1 domain in the interval 131 to 326 (DSFMKKLNEP…IAKIAAKIAV (196 aa)). Positions 283, 297, and 299 each coordinate Mg(2+). 3 residues coordinate Mn(2+): Gln-283, Glu-297, and Asn-299. An oligomerization domain region spans residues 401-539 (IGADGFTETP…YGCYDLEDEV (139 aa)). The tract at residues 540–926 (EVSDRRKVLI…YKSQLSASMD (387 aa)) is carbamoyl phosphate synthetic domain. The ATP-grasp 2 domain occupies 664 to 858 (TEVLNKLGIP…LAKMAARLMM (195 aa)). Arg-700, Lys-739, Leu-741, Glu-746, Gly-771, Val-772, His-773, Ser-774, Gln-814, and Glu-829 together coordinate ATP. Gln-814, Glu-829, and Asn-831 together coordinate Mg(2+). Residues Gln-814, Glu-829, and Asn-831 each coordinate Mn(2+). Residues 925–1060 (MDLLNEGKVF…VKSLDEYHGM (136 aa)) form the MGS-like domain. Residues 927–1060 (LLNEGKVFIS…VKSLDEYHGM (134 aa)) are allosteric domain.

It belongs to the CarB family. Composed of two chains; the small (or glutamine) chain promotes the hydrolysis of glutamine to ammonia, which is used by the large (or ammonia) chain to synthesize carbamoyl phosphate. Tetramer of heterodimers (alpha,beta)4. The cofactor is Mg(2+). Requires Mn(2+) as cofactor.

It carries out the reaction hydrogencarbonate + L-glutamine + 2 ATP + H2O = carbamoyl phosphate + L-glutamate + 2 ADP + phosphate + 2 H(+). The enzyme catalyses hydrogencarbonate + NH4(+) + 2 ATP = carbamoyl phosphate + 2 ADP + phosphate + 2 H(+). It functions in the pathway amino-acid biosynthesis; L-arginine biosynthesis; carbamoyl phosphate from bicarbonate: step 1/1. It participates in pyrimidine metabolism; UMP biosynthesis via de novo pathway; (S)-dihydroorotate from bicarbonate: step 1/3. Its function is as follows. Large subunit of the glutamine-dependent carbamoyl phosphate synthetase (CPSase). CPSase catalyzes the formation of carbamoyl phosphate from the ammonia moiety of glutamine, carbonate, and phosphate donated by ATP, constituting the first step of 2 biosynthetic pathways, one leading to arginine and/or urea and the other to pyrimidine nucleotides. The large subunit (synthetase) binds the substrates ammonia (free or transferred from glutamine from the small subunit), hydrogencarbonate and ATP and carries out an ATP-coupled ligase reaction, activating hydrogencarbonate by forming carboxy phosphate which reacts with ammonia to form carbamoyl phosphate. This Methanothermobacter thermautotrophicus (strain ATCC 29096 / DSM 1053 / JCM 10044 / NBRC 100330 / Delta H) (Methanobacterium thermoautotrophicum) protein is Carbamoyl phosphate synthase large chain.